The following is a 120-amino-acid chain: Myohemerythrin (120 aa).

The Fe cation site is built by histidine 26, histidine 56, glutamate 60, histidine 75, histidine 79, histidine 108, and aspartate 113.

Belongs to the hemerythrin family. In terms of assembly, monomer.

It localises to the cytoplasm. In terms of biological role, myohemerythrin is an oxygen-binding protein found in the retractor muscles of certain worms. The oxygen-binding site contains two iron atoms. In Theromyzon tessulatum (Duck leech), this protein is Myohemerythrin.